The following is a 202-amino-acid chain: LexA repressor 1 (202 aa).

Positions 28–48 (RAEIAQELGFKSPNAAEEHLK) form a DNA-binding region, H-T-H motif. Active-site for autocatalytic cleavage activity residues include Ser-123 and Lys-160.

It belongs to the peptidase S24 family. In terms of assembly, homodimer.

It carries out the reaction Hydrolysis of Ala-|-Gly bond in repressor LexA.. Functionally, represses a number of genes involved in the response to DNA damage (SOS response), including recA and lexA. In the presence of single-stranded DNA, RecA interacts with LexA causing an autocatalytic cleavage which disrupts the DNA-binding part of LexA, leading to derepression of the SOS regulon and eventually DNA repair. This is LexA repressor 1 from Pseudomonas syringae pv. tomato (strain ATCC BAA-871 / DC3000).